A 256-amino-acid polypeptide reads, in one-letter code: Triosephosphate isomerase (256 aa).

10–12 (NWK) contributes to the substrate binding site. The Electrophile role is filled by His97. Catalysis depends on Glu169, which acts as the Proton acceptor. Residues Gly175, Ser214, and 235-236 (GG) contribute to the substrate site.

Belongs to the triosephosphate isomerase family. Homodimer.

The protein localises to the cytoplasm. It carries out the reaction D-glyceraldehyde 3-phosphate = dihydroxyacetone phosphate. Its pathway is carbohydrate biosynthesis; gluconeogenesis. It functions in the pathway carbohydrate degradation; glycolysis; D-glyceraldehyde 3-phosphate from glycerone phosphate: step 1/1. Involved in the gluconeogenesis. Catalyzes stereospecifically the conversion of dihydroxyacetone phosphate (DHAP) to D-glyceraldehyde-3-phosphate (G3P). The chain is Triosephosphate isomerase from Haemophilus ducreyi (strain 35000HP / ATCC 700724).